The following is a 297-amino-acid chain: Formylmethanofuran--tetrahydromethanopterin formyltransferase (297 aa).

Belongs to the FTR family. As to quaternary structure, homotetramer.

It localises to the cytoplasm. The enzyme catalyses N-formylmethanofuran + 5,6,7,8-tetrahydromethanopterin + H(+) = N(5)-formyl-5,6,7,8-tetrahydromethanopterin + methanofuran. It participates in one-carbon metabolism; methanogenesis from CO(2); 5,10-methenyl-5,6,7,8-tetrahydromethanopterin from CO(2): step 2/3. Functionally, catalyzes the reversible transfer of a formyl group from formylmethanofuran (formyl-MFR) to tetrahydromethanopterin (H(4)MPT) to produce 5-formyl tetrahydromethanopterin (5-formyl-H(4)MPT) and methanofuran (MFR). This is Formylmethanofuran--tetrahydromethanopterin formyltransferase from Methanothermobacter thermautotrophicus (strain ATCC 29096 / DSM 1053 / JCM 10044 / NBRC 100330 / Delta H) (Methanobacterium thermoautotrophicum).